The primary structure comprises 372 residues: Flagellar P-ring protein (372 aa).

The signal sequence occupies residues 1-29 (MPARPIPVPAFALALALAAALAVPAPAAA).

This sequence belongs to the FlgI family. As to quaternary structure, the basal body constitutes a major portion of the flagellar organelle and consists of four rings (L,P,S, and M) mounted on a central rod.

It is found in the periplasm. The protein localises to the bacterial flagellum basal body. In terms of biological role, assembles around the rod to form the L-ring and probably protects the motor/basal body from shearing forces during rotation. The sequence is that of Flagellar P-ring protein from Anaeromyxobacter dehalogenans (strain 2CP-1 / ATCC BAA-258).